Here is a 244-residue protein sequence, read N- to C-terminus: Small ribosomal subunit protein eS4 (244 aa).

Positions 37–123 (VPLAILLKYY…AKYKFVRIMN (87 aa)) constitute an S4 RNA-binding domain.

It belongs to the eukaryotic ribosomal protein eS4 family.

The protein is Small ribosomal subunit protein eS4 (rps4e) of Sulfolobus acidocaldarius (strain ATCC 33909 / DSM 639 / JCM 8929 / NBRC 15157 / NCIMB 11770).